A 452-amino-acid chain; its full sequence is Bifunctional protein GlmU (452 aa).

A pyrophosphorylase region spans residues 1–224 (MNIVILAAGQ…EWEVLGVNSK (224 aa)). UDP-N-acetyl-alpha-D-glucosamine is bound by residues 6–9 (LAAG), Lys20, Gln71, 76–77 (GT), 98–100 (YGD), Gly134, Glu149, Asn164, and Asn222. Asp100 is a Mg(2+) binding site. Asn222 provides a ligand contact to Mg(2+). Residues 225 to 245 (VQLAELERQHQLNLAGELLVA) form a linker region. An N-acetyltransferase region spans residues 246-452 (GVRLADPARI…GWERPKKVKK (207 aa)). The UDP-N-acetyl-alpha-D-glucosamine site is built by Arg328 and Lys346. His358 (proton acceptor) is an active-site residue. The UDP-N-acetyl-alpha-D-glucosamine site is built by Tyr361 and Asn372. Acetyl-CoA-binding positions include Ala375, 381-382 (NY), Ser400, Ala418, and Arg435.

It in the N-terminal section; belongs to the N-acetylglucosamine-1-phosphate uridyltransferase family. This sequence in the C-terminal section; belongs to the transferase hexapeptide repeat family. As to quaternary structure, homotrimer. It depends on Mg(2+) as a cofactor.

The protein localises to the cytoplasm. The catalysed reaction is alpha-D-glucosamine 1-phosphate + acetyl-CoA = N-acetyl-alpha-D-glucosamine 1-phosphate + CoA + H(+). It carries out the reaction N-acetyl-alpha-D-glucosamine 1-phosphate + UTP + H(+) = UDP-N-acetyl-alpha-D-glucosamine + diphosphate. It participates in nucleotide-sugar biosynthesis; UDP-N-acetyl-alpha-D-glucosamine biosynthesis; N-acetyl-alpha-D-glucosamine 1-phosphate from alpha-D-glucosamine 6-phosphate (route II): step 2/2. It functions in the pathway nucleotide-sugar biosynthesis; UDP-N-acetyl-alpha-D-glucosamine biosynthesis; UDP-N-acetyl-alpha-D-glucosamine from N-acetyl-alpha-D-glucosamine 1-phosphate: step 1/1. Its pathway is bacterial outer membrane biogenesis; LPS lipid A biosynthesis. Catalyzes the last two sequential reactions in the de novo biosynthetic pathway for UDP-N-acetylglucosamine (UDP-GlcNAc). The C-terminal domain catalyzes the transfer of acetyl group from acetyl coenzyme A to glucosamine-1-phosphate (GlcN-1-P) to produce N-acetylglucosamine-1-phosphate (GlcNAc-1-P), which is converted into UDP-GlcNAc by the transfer of uridine 5-monophosphate (from uridine 5-triphosphate), a reaction catalyzed by the N-terminal domain. This Dechloromonas aromatica (strain RCB) protein is Bifunctional protein GlmU.